We begin with the raw amino-acid sequence, 63 residues long: MKKSLQLSFSFLIISIILSHGMMADAQKKNCPHKIPIKGSYCAPTICLDMCKKQHGTVGSCAE.

Pollen specific.

This Brassica napus (Rape) protein is Protein BP4A (BP4A).